A 515-amino-acid polypeptide reads, in one-letter code: Vesicular acetylcholine transporter (515 aa).

The Cytoplasmic segment spans residues 1–40 (MGVTMAVGLAKAAMGKISSAIGERSKRISGAMNEPRRKRK). The helical transmembrane segment at 41 to 61 (ILLVIVCIAMLLDNMLYMVIV) threads the bilayer. At 62-112 (PIIPNYLETIRTYKLVYITTPSNGTNGSLLNSTQRAVLERNPNANEDIQIG) the chain is on the lumenal, vesicle side. N-linked (GlcNAc...) asparagine glycosylation is found at Asn-84, Asn-87, and Asn-92. Residues 113–133 (VLFASKAILQLLSNPFTGTFI) traverse the membrane as a helical segment. Topologically, residues 134–139 (DRVGYD) are cytoplasmic. Residues 140–160 (IPLLIGLTIMFFSTITFAFGE) form a helical membrane-spanning segment. Over 161-169 (SYAVLFAAR) the chain is Lumenal, vesicle. A helical membrane pass occupies residues 170-190 (SLQGLGSAFADTSGIAMIADK). Topologically, residues 191–201 (YTEESERTQAL) are cytoplasmic. The chain crosses the membrane as a helical span at residues 202 to 222 (GIALAFISFGSLVAPPFGGVL). At 223–229 (YQFAGKW) the chain is on the lumenal, vesicle side. Residues 230 to 250 (VPFLVLSFVCLLDGILLLMVV) form a helical membrane-spanning segment. Residues 251 to 271 (TPFASRTRENMLQGTPIYKLM) are Cytoplasmic-facing. A helical transmembrane segment spans residues 272 to 292 (IDPYIAVVAGALTTCNIPLAF). Over 293–310 (LEPTISNWMKKTMNASEW) the chain is Lumenal, vesicle. A glycan (N-linked (GlcNAc...) asparagine) is linked at Asn-306. The helical transmembrane segment at 311 to 331 (QMGITWLPAFFPHILGVYITV) threads the bilayer. The Cytoplasmic portion of the chain corresponds to 332 to 341 (KLAAKYPNYQ). A helical transmembrane segment spans residues 342 to 362 (WFYGAVGLVIIGASSCTIPAC). Over 363-367 (RNFEE) the chain is Lumenal, vesicle. A helical membrane pass occupies residues 368 to 388 (LIIPLCALCFGIALVDTALLP). The Cytoplasmic segment spans residues 389 to 404 (TLAFLVDIRYVSVYGS). Residues 405-425 (VYAIADISYSVAYALGPIMAG) form a helical membrane-spanning segment. The Lumenal, vesicle portion of the chain corresponds to 426–432 (QIVHDLG). Residues 433–453 (FVQLNLGMGLVNILYAPALLF) traverse the membrane as a helical segment. Over 454-515 (LRNVCQMKPS…VLSDQEGYSE (62 aa)) the chain is Cytoplasmic. The tract at residues 489 to 515 (AAKEPHGSSSGNHSVHAVLSDQEGYSE) is disordered.

This sequence belongs to the major facilitator superfamily. Vesicular transporter family. In terms of tissue distribution, electric lobe.

It is found in the membrane. Its function is as follows. Involved in acetylcholine transport into synaptic vesicles. This is Vesicular acetylcholine transporter from Tetronarce californica (Pacific electric ray).